Here is a 593-residue protein sequence, read N- to C-terminus: Mitoguardin 2 (593 aa).

A run of 2 helical transmembrane segments spans residues 11-31 and 42-62; these read MIQA…TTFG and PGLR…ALAA. 2 disordered regions span residues 103 to 141 and 196 to 231; these read GYSS…VASM and SVGQ…SQRK. 2 stretches are compositionally biased toward low complexity: residues 106 to 116 and 123 to 141; these read SRRVQSPSSKS and ISSI…VASM. Ser132 carries the post-translational modification Phosphoserine. A Phosphothreonine modification is found at Thr206. A phosphoserine mark is found at Ser220, Ser224, and Ser228. Thr273 carries the post-translational modification Phosphothreonine. Residues Ser276 and Ser295 each carry the phosphoserine modification. Positions 292–298 match the FFAT motif; that stretch reads SFFSATE.

The protein belongs to the mitoguardin family. Homodimer and heterodimer; forms heterodimers with MIGA1. Interacts with PLD6/MitoPLD. Interacts (via phosphorylated FFAT motif) with MOSPD2, VAPA and VAPB. Phosphorylation at Ser-295 of the FFAT motif activates interaction with MOSPD2, VAPA and VAPB.

The protein resides in the mitochondrion outer membrane. Its function is as follows. Regulator of mitochondrial fusion: acts by forming homo- and heterodimers at the mitochondrial outer membrane and facilitating the formation of PLD6/MitoPLD dimers. May act by regulating phospholipid metabolism via PLD6/MitoPLD. The sequence is that of Mitoguardin 2 from Homo sapiens (Human).